The following is a 188-amino-acid chain: Adenylate kinase (188 aa).

Gly-10–Thr-15 contributes to the ATP binding site. An NMP region spans residues Ser-30–Val-59. AMP-binding positions include Thr-31, Arg-36, Asn-57 to Val-59, Gly-85 to Arg-88, and Gln-92. An LID region spans residues Lys-126–Asp-136. Arg-127 provides a ligand contact to ATP. Residues Arg-133 and Arg-144 each contribute to the AMP site. Gly-172 serves as a coordination point for ATP.

Belongs to the adenylate kinase family. In terms of assembly, monomer.

It is found in the cytoplasm. It catalyses the reaction AMP + ATP = 2 ADP. The protein operates within purine metabolism; AMP biosynthesis via salvage pathway; AMP from ADP: step 1/1. Catalyzes the reversible transfer of the terminal phosphate group between ATP and AMP. Plays an important role in cellular energy homeostasis and in adenine nucleotide metabolism. This is Adenylate kinase from Maricaulis maris (strain MCS10) (Caulobacter maris).